We begin with the raw amino-acid sequence, 188 residues long: UPF0301 protein PD_1276 (188 aa).

It belongs to the UPF0301 (AlgH) family.

This is UPF0301 protein PD_1276 from Xylella fastidiosa (strain Temecula1 / ATCC 700964).